The following is a 569-amino-acid chain: Mitochondrial import receptor subunit tomm-70 (569 aa).

The Mitochondrial intermembrane segment spans residues 1–12; it reads MVETTGISDQTK. A helical transmembrane segment spans residues 13–32; that stretch reads KVLIGVAAAATVAGVGYLVY. Residues 33 to 569 are Cytoplasmic-facing; sequence KSFGGSDLER…KRAAEMLDMY (537 aa). TPR repeat units follow at residues 44–77, 119–152, 221–254, and 510–544; these read LEEI…AGPN, TKAY…DSSL, DQKQ…PPAM, and LHLL…APPR.

This sequence belongs to the Tom70 family. Forms part of the preprotein translocase complex of the outer mitochondrial membrane (TOM complex). As to expression, expressed in body wall muscle cells, the pharynx and structures in the tail.

The protein localises to the mitochondrion outer membrane. In terms of biological role, receptor that accelerates the import of all mitochondrial precursor proteins. The protein is Mitochondrial import receptor subunit tomm-70 of Caenorhabditis elegans.